The primary structure comprises 260 residues: Collagenase (260 aa).

Residues 1–16 (MKFLLVFALALATTSA) form the signal peptide. Positions 17–30 (FQHPASIFELREGR) are excised as a propeptide. The 227-residue stretch at 31 to 257 (IINGYEAYTG…YMDWIQQNTG (227 aa)) folds into the Peptidase S1 domain. Residues cysteine 60 and cysteine 76 are joined by a disulfide bond. Active-site charge relay system residues include histidine 75 and aspartate 118. Cystine bridges form between cysteine 181-cysteine 196 and cysteine 206-cysteine 234. The active-site Charge relay system is serine 210.

It belongs to the peptidase S1 family.

It localises to the secreted. The catalysed reaction is Hydrolysis of proteins including native collagen at Xaa-|-Ala bond leaving an N-terminal (75%) and a C-terminal (25%) fragment.. With respect to regulation, inhibited by diisopropylfluorophosphate. This enzyme is a serine protease capable of degrading the native triple helix of collagen. Also cleaves the B chain of insulin at the 15-Leu-|-Try-16 and 22-Arg-|-Gly-23 bonds. Hydrolyzes casein, but not Px-Pro-Leu-Gly-Pro-DArg, BzArgNHPh, AcTyrNHPh, 2-naphthyl phosphate, 2-naphthyl butyrate, 2-naphthyl caprylate, 2-naphthyl myristate, L-leucine 2-2-naphthylamide, L-valine 2-naphthylamide, L-cysteine 2-naphthylamide or L-glutarylphenylalanine 2-naphthylamide. This Hypoderma lineatum (Early cattle grub) protein is Collagenase.